Consider the following 179-residue polypeptide: Large ribosomal subunit protein uL5 (179 aa).

The protein belongs to the universal ribosomal protein uL5 family. Part of the 50S ribosomal subunit; part of the 5S rRNA/L5/L18/L25 subcomplex. Contacts the 5S rRNA and the P site tRNA. Forms a bridge to the 30S subunit in the 70S ribosome.

Functionally, this is one of the proteins that bind and probably mediate the attachment of the 5S RNA into the large ribosomal subunit, where it forms part of the central protuberance. In the 70S ribosome it contacts protein S13 of the 30S subunit (bridge B1b), connecting the 2 subunits; this bridge is implicated in subunit movement. Contacts the P site tRNA; the 5S rRNA and some of its associated proteins might help stabilize positioning of ribosome-bound tRNAs. This is Large ribosomal subunit protein uL5 from Staphylococcus carnosus (strain TM300).